The sequence spans 161 residues: MKVGIIMGSKSDWPTMKLAAEMLDRFNVPYETKVVSAHRTPQLLADYATQAKDRGIKVIIAGAGGAAHLPGMAAAFTSVPVLGVPVQSRALKGMDSLLSIVQMPKGIAVGTLAIGEAGAANAGILAAQIIGTSNEEVMAAVEAFRKEQTEMVLENPDPSED.

Ser9, Asp12, and Arg39 together coordinate substrate.

Belongs to the AIR carboxylase family. Class I subfamily.

The catalysed reaction is 5-carboxyamino-1-(5-phospho-D-ribosyl)imidazole + H(+) = 5-amino-1-(5-phospho-D-ribosyl)imidazole-4-carboxylate. It functions in the pathway purine metabolism; IMP biosynthesis via de novo pathway; 5-amino-1-(5-phospho-D-ribosyl)imidazole-4-carboxylate from 5-amino-1-(5-phospho-D-ribosyl)imidazole (N5-CAIR route): step 2/2. Functionally, catalyzes the conversion of N5-carboxyaminoimidazole ribonucleotide (N5-CAIR) to 4-carboxy-5-aminoimidazole ribonucleotide (CAIR). The sequence is that of N5-carboxyaminoimidazole ribonucleotide mutase from Aliivibrio fischeri (strain ATCC 700601 / ES114) (Vibrio fischeri).